A 234-amino-acid chain; its full sequence is O-antigen biosynthesis glycosyltransferase WbnI (234 aa).

Residues 8–13 (ICTGEY), 93–95 (NAV), and 115–118 (HPGY) each bind substrate. Glu-185 serves as the catalytic Nucleophile.

The protein belongs to the glycosyltransferase 6 family. Requires Mn(2+) as cofactor.

The catalysed reaction is alpha-L-Fuc-(1-&gt;2)-beta-D-Gal-(1-&gt;3)-alpha-D-GalNAc-(1-&gt;3)-alpha-D-GalNAc-di-trans,octa-cis-undecaprenyl diphosphate + UDP-alpha-D-galactose = alpha-L-Fuc-(1-&gt;2)-[alpha-D-Gal-(1-&gt;3)]-beta-D-Gal-(1-&gt;3)-alpha-D-GalNAc-(1-&gt;3)-alpha-D-GalNAc-di-trans,octa-cis-undecaprenyl diphosphate + UDP + H(+). It participates in bacterial outer membrane biogenesis; LPS O-antigen biosynthesis. Its function is as follows. Involved in the assembly of the O-repeating unit during O-antigen biosynthesis. The sequence is that of O-antigen biosynthesis glycosyltransferase WbnI from Escherichia coli.